The following is a 280-amino-acid chain: Inhibitor of growth protein 2 (280 aa).

Residues 48 to 120 are a coiled coil; it reads VLRELDNKYQ…VENRARQMEL (73 aa). The interval 122-204 is disordered; sequence SQCFQDPAES…KQEREASPVE (83 aa). Over residues 130–140 the composition is skewed to basic and acidic residues; the sequence is ESERASDKAKM. Basic residues predominate over residues 181–193; sequence KKSKSAKKKKRSK. A Glycyl lysine isopeptide (Lys-Gly) (interchain with G-Cter in SUMO1) cross-link involves residue K195. The PHD-type zinc-finger motif lies at 212 to 261; it reads PTYCLCNQVSYGEMIGCDNEQCPIEWFHFSCVSLTYKPKGKWYCPKCRGD. Residues C215, C217, C228, C233, H239, C242, C255, and C258 each contribute to the Zn(2+) site. The segment covering 258 to 274 has biased composition (basic and acidic residues); sequence CRGDNEKTMDKSTEKTK. The interval 258–280 is disordered; it reads CRGDNEKTMDKSTEKTKKDRRSR. The segment at 264-280 is PBR; it reads KTMDKSTEKTKKDRRSR.

Belongs to the ING family. Interacts with H3K4me3 and to a lesser extent with H3K4me2. Component of a mSin3A-like complex at least consisting of SIN3A, HDAC1, HDAC2, RBBP4/RbAp48, RBBP7/RbAp46, SAP30 and ING2. Sumoylation enhances its association with SIN3A and is required for binding to some target gene promoters, this is the case for TMEM71. Widely expressed. Higher expressed in colon-cancer tumor than in normal colon tissues.

Its subcellular location is the nucleus. In terms of biological role, seems to be involved in p53/TP53 activation and p53/TP53-dependent apoptotic pathways, probably by enhancing acetylation of p53/TP53. Component of a mSin3A-like corepressor complex, which is probably involved in deacetylation of nucleosomal histones. ING2 activity seems to be modulated by binding to phosphoinositides (PtdInsPs). This Homo sapiens (Human) protein is Inhibitor of growth protein 2 (ING2).